The following is a 187-amino-acid chain: dCTP deaminase (187 aa).

Residues 110–115, 134–136, Q155, Y169, and Q179 each bind dCTP; these read KSTYAR and TLE. The active-site Proton donor/acceptor is E136.

It belongs to the dCTP deaminase family. Homotrimer.

The catalysed reaction is dCTP + H2O + H(+) = dUTP + NH4(+). The protein operates within pyrimidine metabolism; dUMP biosynthesis; dUMP from dCTP (dUTP route): step 1/2. Catalyzes the deamination of dCTP to dUTP. In Bordetella pertussis (strain Tohama I / ATCC BAA-589 / NCTC 13251), this protein is dCTP deaminase.